The following is an 80-amino-acid chain: Mitotic-spindle organizing protein 1 (80 aa).

This sequence belongs to the MOZART1 family. Part of the gamma-tubulin complex.

It localises to the cytoplasm. The protein resides in the cytoskeleton. The protein localises to the microtubule organizing center. Its subcellular location is the spindle pole body. Functionally, required for gamma-tubulin complex recruitment to the microtubule organizing center (MTOC). This chain is Mitotic-spindle organizing protein 1, found in Pyricularia oryzae (strain 70-15 / ATCC MYA-4617 / FGSC 8958) (Rice blast fungus).